Reading from the N-terminus, the 273-residue chain is Probable ribosomal RNA small subunit methyltransferase A (273 aa).

Positions 23, 25, 50, 71, 95, and 110 each coordinate S-adenosyl-L-methionine.

Belongs to the class I-like SAM-binding methyltransferase superfamily. rRNA adenine N(6)-methyltransferase family. RsmA subfamily.

The protein localises to the cytoplasm. Specifically dimethylates two adjacent adenosines in the loop of a conserved hairpin near the 3'-end of 16S rRNA in the 30S particle. May play a critical role in biogenesis of 30S subunits. The sequence is that of Probable ribosomal RNA small subunit methyltransferase A from Thermococcus sibiricus (strain DSM 12597 / MM 739).